An 860-amino-acid polypeptide reads, in one-letter code: Probable beta-glucosidase A (860 aa).

The signal sequence occupies residues 1–19 (MRFTSIEAVALTAVSLASA). N-linked (GlcNAc...) asparagine glycosylation is found at asparagine 61, asparagine 211, and asparagine 252. The active site involves aspartate 280. Residues asparagine 315, asparagine 322, asparagine 354, asparagine 387, asparagine 442, asparagine 523, asparagine 542, asparagine 564, asparagine 658, asparagine 690, and asparagine 712 are each glycosylated (N-linked (GlcNAc...) asparagine).

The protein belongs to the glycosyl hydrolase 3 family.

Its subcellular location is the secreted. The enzyme catalyses Hydrolysis of terminal, non-reducing beta-D-glucosyl residues with release of beta-D-glucose.. The protein operates within glycan metabolism; cellulose degradation. In terms of biological role, beta-glucosidases are one of a number of cellulolytic enzymes involved in the degradation of cellulosic biomass. Catalyzes the last step releasing glucose from the inhibitory cellobiose. This chain is Probable beta-glucosidase A (bglA), found in Aspergillus niger (strain ATCC MYA-4892 / CBS 513.88 / FGSC A1513).